The following is a 419-amino-acid chain: Acyl-[acyl-carrier-protein] desaturase 6, chloroplastic (419 aa).

The N-terminal 54 residues, 1 to 54 (MAATATMAMPLANRLRCKPNTNSSSPSRTLFGRRVTMISSSRWGSAVSGSAIMS), are a transit peptide targeting the chloroplast. Glu151, Glu189, His192, Glu242, Glu277, and His280 together coordinate Fe cation.

Belongs to the fatty acid desaturase type 2 family. In terms of assembly, homodimer. Fe(2+) is required as a cofactor.

It localises to the plastid. The protein resides in the chloroplast. It functions in the pathway lipid metabolism; fatty acid metabolism. Functionally, introduces a cis double bond in the acyl chain of an acyl-[acyl-carrier protein]. This Oryza sativa subsp. japonica (Rice) protein is Acyl-[acyl-carrier-protein] desaturase 6, chloroplastic.